The primary structure comprises 129 residues: Phosphoribosyl-AMP cyclohydrolase (129 aa).

D76 is a Mg(2+) binding site. C77 is a Zn(2+) binding site. Mg(2+) contacts are provided by D78 and D80. The Zn(2+) site is built by C97 and C104.

Belongs to the PRA-CH family. In terms of assembly, homodimer. It depends on Mg(2+) as a cofactor. Requires Zn(2+) as cofactor.

The protein resides in the cytoplasm. The catalysed reaction is 1-(5-phospho-beta-D-ribosyl)-5'-AMP + H2O = 1-(5-phospho-beta-D-ribosyl)-5-[(5-phospho-beta-D-ribosylamino)methylideneamino]imidazole-4-carboxamide. The protein operates within amino-acid biosynthesis; L-histidine biosynthesis; L-histidine from 5-phospho-alpha-D-ribose 1-diphosphate: step 3/9. Catalyzes the hydrolysis of the adenine ring of phosphoribosyl-AMP. This chain is Phosphoribosyl-AMP cyclohydrolase, found in Albidiferax ferrireducens (strain ATCC BAA-621 / DSM 15236 / T118) (Rhodoferax ferrireducens).